Reading from the N-terminus, the 142-residue chain is Transcriptional regulator MraZ (142 aa).

SpoVT-AbrB domains follow at residues 5–47 (EYQH…PLDE) and 76–119 (ACEV…SKEK).

Belongs to the MraZ family. In terms of assembly, forms oligomers.

The protein localises to the cytoplasm. It is found in the nucleoid. The chain is Transcriptional regulator MraZ from Clostridium beijerinckii (strain ATCC 51743 / NCIMB 8052) (Clostridium acetobutylicum).